The primary structure comprises 600 residues: Polypeptide N-acetylgalactosaminyltransferase (600 aa).

Residues 1–7 (MVRRKLR) lie on the Cytoplasmic side of the membrane. Residues 8 to 28 (LLVILAGIWLVGIVVYLFKGD) form a helical; Signal-anchor for type II membrane protein membrane-spanning segment. The Lumenal segment spans residues 29–600 (DQSEFEKRVI…KWTFSLSKNR (572 aa)). Cystine bridges form between Cys154–Cys382, Cys373–Cys451, Cys484–Cys501, Cys524–Cys541, and Cys567–Cys583. The tract at residues 163 to 268 (LPDTSVIITF…EKWLEPLLDR (106 aa)) is catalytic subdomain A. Substrate contacts are provided by Thr171, Asp204, and Arg229. Asp252 serves as a coordination point for Mn(2+). Residue Ser253 participates in substrate binding. His254 is a Mn(2+) binding site. A catalytic subdomain B region spans residues 328–390 (PIRTPMIAGG…PCSRVGHVFR (63 aa)). Trp359 contributes to the substrate binding site. His387 provides a ligand contact to Mn(2+). Residues Arg390, His393, and Tyr395 each coordinate substrate. The Ricin B-type lectin domain maps to 466–595 (KIPSVQDIAF…SSYTQKWTFS (130 aa)).

It belongs to the glycosyltransferase 2 family. GalNAc-T subfamily. Mn(2+) is required as a cofactor. In terms of processing, O-glycosylated.

It is found in the golgi apparatus membrane. It catalyses the reaction L-seryl-[protein] + UDP-N-acetyl-alpha-D-galactosamine = a 3-O-[N-acetyl-alpha-D-galactosaminyl]-L-seryl-[protein] + UDP + H(+). The enzyme catalyses L-threonyl-[protein] + UDP-N-acetyl-alpha-D-galactosamine = a 3-O-[N-acetyl-alpha-D-galactosaminyl]-L-threonyl-[protein] + UDP + H(+). Its pathway is protein modification; protein glycosylation. With respect to regulation, no change in activity by addition of up to 10% methanol or glycerol, or 5% acetonitrile. 40% reduction in activity by 10% acetonitrile or by lyophilization. Activity requires divalent cations, the best being Mn(2+) (10-20 mM), followed by Co(2+), Mg(2+) and Ca(2+). Loss of activity with Cu(2+) or in the presence of EDTA. Inhibited by UDP, but not by UMP, UTP, ADP or GDP nucleotides. No inhibition by galactose, N-acetylglucosamine or N-acetylgalactosamine sugars. Catalyzes the initial reaction in O-linked oligosaccharide biosynthesis, the transfer of an N-acetyl-D-galactosamine residue to a serine or threonine residue on the protein receptor. Has a broad substrate specificity. Acceptor peptides include Muc2, Muc5Ac, Muc1a and Muc1a', with Muc2 as the best acceptor. Acts on non-glycosylated and mono- or multi-glycosylated peptide substrates. Transfers preferably to threonine rather than serine residue. Thr-15 is the most preferred site of glycosylation in Muc2 peptide PTTTPITTTTTVTPTPTPTGTQTK having proline residues at position -1, and at positions +1 and +3, where the number represents the distance from the C-terminal and N-terminal hydroxyl amino acid, respectively. Transfer of the N-acetyl-D-galactosamine (GalNAc) is optimal with proline residues at positions -3, -1, +1 and +3, but other amino acids are tolerated, although some, such as phenylalanine, isoleucine or leucine at -1, or lysine at +3 prevent the transfer completely. Second GalNAc is transferred to Muc2 Thr-2 or Thr-13, both of which have two proline residues nearby. Up to nine sites can be glycosylated within Muc2, but eight are used simultaneously since Thr-19 and Thr-21 are not detected to be glycosylated at the same time. Glycosylation is not detected of a potential site, which is next to an already glycosylated site, but only one amino acid is needed in between two glycosylation sites. Ser-5 is the preferred glycosylation site in Muc5Ac peptide GTTPSPVPTTSTTSAP into which up to four GalNAcs can be attached. Only the threonine residues are detected as pontential glycosylation sites in Muc1a APPAHGVTSAPDTRPAPGC and Muc1a' AHGVTSAPDTR peptides. Transferase activity is restricted to UDP-GalNAc as a donor, and none of the nucleotide sugars UDP-Gal, UDP-GlcNAc, GDP-fucose, UDP-xylose, UDP-glucuronic acid or CMP-neuraminic acid are utilized as donors. In Biomphalaria glabrata (Bloodfluke planorb), this protein is Polypeptide N-acetylgalactosaminyltransferase.